Consider the following 744-residue polypeptide: TonB-dependent heme receptor A (744 aa).

The signal sequence occupies residues 1-24; it reads MNILINKRIFLLVTLVGIQLNVTA. The TBDR plug domain occupies 45–157; the sequence is DDSNKLPGRS…FAGTVKFETK (113 aa). One can recognise a TBDR beta-barrel domain in the interval 168 to 744; sequence KIGGFLKYGN…NIKFSLSQKF (577 aa).

This sequence belongs to the TonB-dependent receptor family.

It localises to the cell outer membrane. In terms of biological role, heme receptor. The sequence is that of TonB-dependent heme receptor A (tdhA) from Haemophilus influenzae (strain ATCC 51907 / DSM 11121 / KW20 / Rd).